The primary structure comprises 160 residues: Large ribosomal subunit protein uL16 (160 aa).

Belongs to the universal ribosomal protein uL16 family. As to quaternary structure, part of the 50S ribosomal subunit.

In terms of biological role, binds 23S rRNA and is also seen to make contacts with the A and possibly P site tRNAs. This is Large ribosomal subunit protein uL16 from Prochlorococcus marinus (strain MIT 9515).